Here is a 276-residue protein sequence, read N- to C-terminus: Undecaprenyl-diphosphatase 1 (276 aa).

6 helical membrane-spanning segments follow: residues 43-63 (RAMA…VWEF), 85-105 (ANLL…ADLI), 109-129 (LFNP…MLWA), 184-204 (ATEF…VYSG), 214-234 (ADFP…MIAV), and 254-274 (IVFG…WTAA).

It belongs to the UppP family.

It is found in the cell inner membrane. The catalysed reaction is di-trans,octa-cis-undecaprenyl diphosphate + H2O = di-trans,octa-cis-undecaprenyl phosphate + phosphate + H(+). In terms of biological role, catalyzes the dephosphorylation of undecaprenyl diphosphate (UPP). Confers resistance to bacitracin. The sequence is that of Undecaprenyl-diphosphatase 1 from Pseudomonas fluorescens (strain Pf0-1).